We begin with the raw amino-acid sequence, 465 residues long: Putative F-box protein At1g21990 (465 aa).

The F-box domain maps to 8–54; it reads RDLISGSPDEILGKILSFLPTHHAATTSVLSKRWRNLLPLVDKLELT.

In Arabidopsis thaliana (Mouse-ear cress), this protein is Putative F-box protein At1g21990.